Consider the following 106-residue polypeptide: ATP-dependent Clp protease adapter protein ClpS (106 aa).

Belongs to the ClpS family. In terms of assembly, binds to the N-terminal domain of the chaperone ClpA.

Its function is as follows. Involved in the modulation of the specificity of the ClpAP-mediated ATP-dependent protein degradation. In Vibrio vulnificus (strain CMCP6), this protein is ATP-dependent Clp protease adapter protein ClpS.